The primary structure comprises 347 residues: Core-capsid bridging protein (347 aa).

Residues 290–320 form a disordered region; the sequence is GYRGTTFQRRATAPSRRRGPSRRRRRRKATL. Basic residues predominate over residues 304-318; that stretch reads SRRRGPSRRRRRRKA.

The protein belongs to the adenoviridae core-capsid bridging protein family. In terms of assembly, monomer. Homodimer. Exists in equilibrium between monomers and dimers in solution. Interacts with the histone-like nucleoprotein; this interactions bridge the virus core to the capsid. Interacts with core protein X; this interactions bridge the virus core to the capsid. Interacts with the endosome lysis protein VI; this interactions bridge the virus core to the capsid. Interacts with the peripentonal hexons. Interacts with host NPM1; this interaction might play a role in virus assembly.

The protein localises to the virion. Its subcellular location is the host nucleus. It is found in the host nucleolus. In terms of biological role, associates loosely with the viral DNA to form an outer shell around the nucleoprotein-DNA complex and links it with the capsid by binding the endosome lysis protein. Dissociates from the viral genome during entry. Might be involved in nuclear capsid assembly of the viral particles through its association with NPM1/nucleophosmin. The sequence is that of Core-capsid bridging protein from Homo sapiens (Human).